Consider the following 481-residue polypeptide: p-aminobenzoyl-glutamate hydrolase subunit B (481 aa).

As to quaternary structure, forms a heterodimer with AbgA. The cofactor is Mn(2+).

Functionally, component of the p-aminobenzoyl-glutamate hydrolase multicomponent enzyme system which catalyzes the cleavage of p-aminobenzoyl-glutamate (PABA-GLU) to form p-aminobenzoate (PABA) and glutamate. AbgAB does not degrade dipeptides and the physiological role of abgABT should be clarified. In Escherichia coli (strain K12), this protein is p-aminobenzoyl-glutamate hydrolase subunit B (abgB).